Consider the following 529-residue polypeptide: Putative cysteine ligase BshC (529 aa).

A coiled-coil region spans residues 450–485 (VKQTKGLENLEKRLLKAQKRNLSDQLQRVIDLQCEL).

Belongs to the BshC family.

The sequence is that of Putative cysteine ligase BshC from Flavobacterium johnsoniae (strain ATCC 17061 / DSM 2064 / JCM 8514 / BCRC 14874 / CCUG 350202 / NBRC 14942 / NCIMB 11054 / UW101) (Cytophaga johnsonae).